Reading from the N-terminus, the 160-residue chain is Cytosolic iron-sulfur assembly component 2A (160 aa).

Residues His89, His123, Glu150, and Glu153 each coordinate Zn(2+).

This sequence belongs to the MIP18 family. In terms of assembly, monomer and homodimer. Component of the CIA complex. Interacts with CIAO1. Interacts with IREB2. Interacts with APAF1.

It localises to the cytoplasm. In terms of biological role, component of the cytosolic iron-sulfur protein assembly (CIA) complex, a multiprotein complex that mediates the incorporation of iron-sulfur cluster into extramitochondrial Fe/S proteins. As a CIA complex component and in collaboration with CIAO1 specifically matures ACO1 and stabilizes IREB2, connecting cytosolic iron-sulfur protein maturation with cellular iron regulation. May play a role in chromosome segregation through establishment of sister chromatid cohesion. May induce apoptosis in collaboration with APAF1. The chain is Cytosolic iron-sulfur assembly component 2A from Bos taurus (Bovine).